The following is a 212-amino-acid chain: Imidazole glycerol phosphate synthase subunit HisH (212 aa).

Positions 3–212 (TVAVIDYGMG…QNFAAWDGRW (210 aa)) constitute a Glutamine amidotransferase type-1 domain. The Nucleophile role is filled by Cys-81. Residues His-190 and Glu-192 contribute to the active site.

In terms of assembly, heterodimer of HisH and HisF.

It localises to the cytoplasm. The catalysed reaction is 5-[(5-phospho-1-deoxy-D-ribulos-1-ylimino)methylamino]-1-(5-phospho-beta-D-ribosyl)imidazole-4-carboxamide + L-glutamine = D-erythro-1-(imidazol-4-yl)glycerol 3-phosphate + 5-amino-1-(5-phospho-beta-D-ribosyl)imidazole-4-carboxamide + L-glutamate + H(+). The enzyme catalyses L-glutamine + H2O = L-glutamate + NH4(+). It participates in amino-acid biosynthesis; L-histidine biosynthesis; L-histidine from 5-phospho-alpha-D-ribose 1-diphosphate: step 5/9. Functionally, IGPS catalyzes the conversion of PRFAR and glutamine to IGP, AICAR and glutamate. The HisH subunit catalyzes the hydrolysis of glutamine to glutamate and ammonia as part of the synthesis of IGP and AICAR. The resulting ammonia molecule is channeled to the active site of HisF. This chain is Imidazole glycerol phosphate synthase subunit HisH, found in Pseudomonas savastanoi pv. phaseolicola (strain 1448A / Race 6) (Pseudomonas syringae pv. phaseolicola (strain 1448A / Race 6)).